The primary structure comprises 527 residues: Bifunctional purine biosynthesis protein PurH (527 aa).

The MGS-like domain occupies 9-156 (MARKPIRRAL…KNHPSVAVVT (148 aa)).

This sequence belongs to the PurH family.

The catalysed reaction is (6R)-10-formyltetrahydrofolate + 5-amino-1-(5-phospho-beta-D-ribosyl)imidazole-4-carboxamide = 5-formamido-1-(5-phospho-D-ribosyl)imidazole-4-carboxamide + (6S)-5,6,7,8-tetrahydrofolate. It catalyses the reaction IMP + H2O = 5-formamido-1-(5-phospho-D-ribosyl)imidazole-4-carboxamide. It functions in the pathway purine metabolism; IMP biosynthesis via de novo pathway; 5-formamido-1-(5-phospho-D-ribosyl)imidazole-4-carboxamide from 5-amino-1-(5-phospho-D-ribosyl)imidazole-4-carboxamide (10-formyl THF route): step 1/1. The protein operates within purine metabolism; IMP biosynthesis via de novo pathway; IMP from 5-formamido-1-(5-phospho-D-ribosyl)imidazole-4-carboxamide: step 1/1. The sequence is that of Bifunctional purine biosynthesis protein PurH from Mycobacterium leprae (strain Br4923).